We begin with the raw amino-acid sequence, 515 residues long: 2-isopropylmalate synthase (515 aa).

The region spanning 4-266 (IKFFDTTLRD…ETRLNLQEIK (263 aa)) is the Pyruvate carboxyltransferase domain. Positions 13, 201, 203, and 237 each coordinate Mn(2+). The tract at residues 391–515 (QLSSIQVQYG…RAENEKVATS (125 aa)) is regulatory domain.

This sequence belongs to the alpha-IPM synthase/homocitrate synthase family. LeuA type 1 subfamily. In terms of assembly, homodimer. The cofactor is Mn(2+).

Its subcellular location is the cytoplasm. It catalyses the reaction 3-methyl-2-oxobutanoate + acetyl-CoA + H2O = (2S)-2-isopropylmalate + CoA + H(+). It functions in the pathway amino-acid biosynthesis; L-leucine biosynthesis; L-leucine from 3-methyl-2-oxobutanoate: step 1/4. In terms of biological role, catalyzes the condensation of the acetyl group of acetyl-CoA with 3-methyl-2-oxobutanoate (2-ketoisovalerate) to form 3-carboxy-3-hydroxy-4-methylpentanoate (2-isopropylmalate). This chain is 2-isopropylmalate synthase, found in Geobacillus stearothermophilus (Bacillus stearothermophilus).